A 198-amino-acid chain; its full sequence is 3-isopropylmalate dehydratase small subunit (198 aa).

It belongs to the LeuD family. LeuD type 1 subfamily. As to quaternary structure, heterodimer of LeuC and LeuD.

It carries out the reaction (2R,3S)-3-isopropylmalate = (2S)-2-isopropylmalate. It participates in amino-acid biosynthesis; L-leucine biosynthesis; L-leucine from 3-methyl-2-oxobutanoate: step 2/4. Catalyzes the isomerization between 2-isopropylmalate and 3-isopropylmalate, via the formation of 2-isopropylmaleate. This Mycobacterium leprae (strain Br4923) protein is 3-isopropylmalate dehydratase small subunit.